Here is a 224-residue protein sequence, read N- to C-terminus: LexA repressor (224 aa).

The segment at residues 41 to 61 (MREIGDAVGLSSLSSVTHQLN) is a DNA-binding region (H-T-H motif). Residues serine 148 and lysine 185 each act as for autocatalytic cleavage activity in the active site.

This sequence belongs to the peptidase S24 family. As to quaternary structure, homodimer.

The catalysed reaction is Hydrolysis of Ala-|-Gly bond in repressor LexA.. Its function is as follows. Represses a number of genes involved in the response to DNA damage (SOS response), including recA and lexA. In the presence of single-stranded DNA, RecA interacts with LexA causing an autocatalytic cleavage which disrupts the DNA-binding part of LexA, leading to derepression of the SOS regulon and eventually DNA repair. In Leifsonia xyli subsp. xyli (strain CTCB07), this protein is LexA repressor.